A 257-amino-acid chain; its full sequence is MIVAVDVGNTSTKIALCENGTVVDKWRISTCGKRTAAEYFSCISVLASRRSADILAGVRGAAISSVVPVVNRHVEELFERFFNISPVFITNSHADLFGLKICLAQPTIGADRVADLVAAKTVWPTSDLLVIDMGTATVFNLLDRNGGLYGQVVAPGVSCLVHSMRECTALLPQTLARESEKIVCDSTAASLEAGLYWGYRAMVEGITKQIMRESTRTLRVIATGGGVGLFRNCDYLNHIDELLTIKGIVQIYEKTQG.

An ATP-binding site is contributed by 6–13 (DVGNTSTK). Position 109-112 (109-112 (GADR)) interacts with substrate. D111 acts as the Proton acceptor in catalysis. D132 contacts K(+). Residue T135 coordinates ATP. T187 is a substrate binding site.

Belongs to the type III pantothenate kinase family. Homodimer. NH4(+) serves as cofactor. It depends on K(+) as a cofactor.

It localises to the cytoplasm. It carries out the reaction (R)-pantothenate + ATP = (R)-4'-phosphopantothenate + ADP + H(+). It participates in cofactor biosynthesis; coenzyme A biosynthesis; CoA from (R)-pantothenate: step 1/5. Functionally, catalyzes the phosphorylation of pantothenate (Pan), the first step in CoA biosynthesis. This chain is Type III pantothenate kinase, found in Anaplasma marginale (strain Florida).